We begin with the raw amino-acid sequence, 241 residues long: Eukaryotic translation initiation factor 3 subunit J (241 aa).

The segment at 1–94 (MDVSWDADNF…EKTAEEMTPE (94 aa)) is disordered. Positions 26-45 (GEDEDDNVKESWEDEEEEKK) are enriched in acidic residues. Residues 61–118 (KKKIHDKIAERERQEREKAERLVTEKTAEEMTPEQKLAEKLRQQKLQEESDLRLAMET) are a coiled coil. Over residues 66–89 (DKIAERERQEREKAERLVTEKTAE) the composition is skewed to basic and acidic residues.

This sequence belongs to the eIF-3 subunit J family. Component of the eukaryotic translation initiation factor 3 (eIF-3) complex.

Its subcellular location is the cytoplasm. Its function is as follows. Component of the eukaryotic translation initiation factor 3 (eIF-3) complex, which is involved in protein synthesis of a specialized repertoire of mRNAs and, together with other initiation factors, stimulates binding of mRNA and methionyl-tRNAi to the 40S ribosome. The eIF-3 complex specifically targets and initiates translation of a subset of mRNAs involved in cell proliferation. This is Eukaryotic translation initiation factor 3 subunit J from Bombyx mori (Silk moth).